A 123-amino-acid polypeptide reads, in one-letter code: Small ribosomal subunit protein bS16 (123 aa).

Positions 86-123 (PVRAEQTKQPQPKAKAQQRAKDQAERDAAAAAEAAAGE) are disordered. The span at 93 to 102 (KQPQPKAKAQ) shows a compositional bias: low complexity. The span at 104 to 113 (RAKDQAERDA) shows a compositional bias: basic and acidic residues. A compositionally biased stretch (low complexity) spans 114 to 123 (AAAAEAAAGE).

The protein belongs to the bacterial ribosomal protein bS16 family.

The sequence is that of Small ribosomal subunit protein bS16 from Paramagnetospirillum magneticum (strain ATCC 700264 / AMB-1) (Magnetospirillum magneticum).